The following is a 295-amino-acid chain: Ribosomal protein L11 methyltransferase (295 aa).

Positions 150, 171, 193, and 232 each coordinate S-adenosyl-L-methionine.

Belongs to the methyltransferase superfamily. PrmA family.

The protein localises to the cytoplasm. It catalyses the reaction L-lysyl-[protein] + 3 S-adenosyl-L-methionine = N(6),N(6),N(6)-trimethyl-L-lysyl-[protein] + 3 S-adenosyl-L-homocysteine + 3 H(+). In terms of biological role, methylates ribosomal protein L11. The sequence is that of Ribosomal protein L11 methyltransferase from Methylobacillus flagellatus (strain ATCC 51484 / DSM 6875 / VKM B-1610 / KT).